We begin with the raw amino-acid sequence, 422 residues long: Dihydrolipoyllysine-residue succinyltransferase component of 2-oxoglutarate dehydrogenase complex (422 aa).

A Lipoyl-binding domain is found at 1-76 (MPEVKVPELA…EVGQAIAIIG (76 aa)). Position 42 is an N6-lipoyllysine (Lys42). Residues 77 to 185 (EGSGNASKEN…SAKEEKKYNQ (109 aa)) are disordered. 2 stretches are compositionally biased toward polar residues: residues 80–94 (GNAS…TPQQ) and 116–130 (NQAN…NATP). Positions 127-163 (NATPSARRYARENGVNLAEVSPKTNDVVRKEDIDKKQ) constitute a Peripheral subunit-binding (PSBD) domain. The segment covering 152-163 (DVVRKEDIDKKQ) has biased composition (basic and acidic residues). Residues 164–176 (QAPASTQTTQQAS) are compositionally biased toward low complexity. Catalysis depends on residues His393 and Asp397.

It belongs to the 2-oxoacid dehydrogenase family. Forms a 24-polypeptide structural core with octahedral symmetry. Part of the 2-oxoglutarate dehydrogenase (OGDH) complex composed of E1 (2-oxoglutarate dehydrogenase), E2 (dihydrolipoamide succinyltransferase) and E3 (dihydrolipoamide dehydrogenase); the complex contains multiple copies of the three enzymatic components (E1, E2 and E3). (R)-lipoate serves as cofactor.

It catalyses the reaction N(6)-[(R)-dihydrolipoyl]-L-lysyl-[protein] + succinyl-CoA = N(6)-[(R)-S(8)-succinyldihydrolipoyl]-L-lysyl-[protein] + CoA. It functions in the pathway amino-acid degradation; L-lysine degradation via saccharopine pathway; glutaryl-CoA from L-lysine: step 6/6. E2 component of the 2-oxoglutarate dehydrogenase (OGDH) complex which catalyzes the second step in the conversion of 2-oxoglutarate to succinyl-CoA and CO(2). The chain is Dihydrolipoyllysine-residue succinyltransferase component of 2-oxoglutarate dehydrogenase complex (odhB) from Staphylococcus aureus (strain USA300).